Consider the following 109-residue polypeptide: Aquaporin-2 (109 aa).

Residues 1 to 6 (SIAFSR) lie on the Cytoplasmic side of the membrane. A helical transmembrane segment spans residues 7-27 (AVLSEFLATLLFVFFGLGSAL). At 28–35 (NWPQALPS) the chain is on the extracellular side. The helical transmembrane segment at 36–54 (VLQIAMAFGLAIGTLVQTL) threads the bilayer. Residues 55–59 (GHISG) are Cytoplasmic-facing. Residues 60–69 (AHINPAVTIA) constitute an intramembrane region (discontinuously helical). The short motif at 63-65 (NPA) is the NPA 1 element. Topologically, residues 70 to 80 (CLVGCHVSFLR) are cytoplasmic. A helical membrane pass occupies residues 81-102 (ALFYLAAQLLGAVAGAALLHEL). Residues 103-109 (TPPDIRG) are Extracellular-facing.

The protein belongs to the MIP/aquaporin (TC 1.A.8) family. Homotetramer. In terms of processing, serine phosphorylation is necessary and sufficient for expression at the apical membrane. Endocytosis is not phosphorylation-dependent. N-glycosylated.

The protein localises to the apical cell membrane. The protein resides in the basolateral cell membrane. Its subcellular location is the cell membrane. It localises to the cytoplasmic vesicle membrane. It is found in the golgi apparatus. The protein localises to the trans-Golgi network membrane. The catalysed reaction is H2O(in) = H2O(out). It carries out the reaction glycerol(in) = glycerol(out). Forms a water-specific channel that provides the plasma membranes of renal collecting duct with high permeability to water, thereby permitting water to move in the direction of an osmotic gradient. Plays an essential role in renal water homeostasis. Could also be permeable to glycerol. The sequence is that of Aquaporin-2 from Procavia capensis habessinica (Abyssinian hyrax).